A 120-amino-acid chain; its full sequence is Small ribosomal subunit protein uS13m (120 aa).

Belongs to the universal ribosomal protein uS13 family. In terms of assembly, part of the small ribosomal subunit.

Its subcellular location is the mitochondrion. Its function is as follows. Located at the top of the head of the small subunit, it contacts several helices of the 18S rRNA. In Marchantia polymorpha (Common liverwort), this protein is Small ribosomal subunit protein uS13m (RPS13).